Consider the following 164-residue polypeptide: MSEPSRDAHQIPHGSKACRRLFGPVDSEQLRRDCDALMAGCVQEARERWNFDFVTETPLEGDFAWERVWGLGLPKLYLPAGPRGGRDDLGGGKRPSTSSTLLPGTAREDHLDLSLSCTLMPHSPERPEASPGAPGTSQGRKRRQTSMTDFYHSKRRLIFSKRKP.

S2 carries the N-acetylserine modification. A Glycyl serine ester (Ser-Gly) (interchain with G-Cter in ubiquitin) cross-link involves residue S2. The C4-type zinc finger occupies 13 to 41 (HGSKACRRLFGPVDSEQLRRDCDALMAGC). The required for binding cyclins stretch occupies residues 17-24 (ACRRLFGP). The required for binding CDKs stretch occupies residues 53 to 58 (FVTETP). The disordered stretch occupies residues 80–164 (AGPRGGRDDL…RRLIFSKRKP (85 aa)). Phosphoserine; by GSK3-beta is present on S114. The residue at position 130 (S130) is a Phosphoserine. The short motif at 140 to 164 (RKRRQTSMTDFYHSKRRLIFSKRKP) is the PIP-box K+4 motif element. The short motif at 141–156 (KRRQTSMTDFYHSKRR) is the Nuclear localization signal element. Phosphothreonine; by PKA, PKB/AKT1, PIM1 and PIM2 is present on T145. S146 carries the post-translational modification Phosphoserine; by PKC and NUAK1. Positions 152-164 (HSKRRLIFSKRKP) are interaction with TRIM39. Residues 153–164 (SKRRLIFSKRKP) are compositionally biased toward basic residues. Position 160 is a phosphoserine (S160).

It belongs to the CDI family. As to quaternary structure, interacts with HDAC1; the interaction is prevented by competitive binding of C10orf90/FATS to HDAC1 facilitating acetylation and protein stabilization of CDKN1A/p21. Interacts with MKRN1. Interacts with PSMA3. Interacts with PCNA. Component of the ternary complex, cyclin D-CDK4-CDKN1A. Interacts (via its N-terminal domain) with CDK4; the interaction promotes the assembly of the cyclin D-CDK4 complex, its nuclear translocation and promotes the cyclin D-dependent enzyme activity of CDK4. Binding to CDK2 leads to CDK2/cyclin E inactivation at the G1-S phase DNA damage checkpoint, thereby arresting cells at the G1-S transition during DNA repair. Interacts with PIM1. Interacts with STK11 and NUAK1. Interacts with DTL and TRIM39. Interacts with PKP3; the interaction sequesters CDKN1A to the cytoplasm thereby repressing its role as an inhibitor of CDK4- and CDK6-driven RB1 phosphorylation. In terms of processing, phosphorylation of Thr-145 by Akt or of Ser-146 by PKC impairs binding to PCNA. Phosphorylation at Ser-114 by GSK3-beta enhances ubiquitination by the DCX(DTL) complex. Phosphorylation of Thr-145 by PIM2 enhances protein stability and inhibits cell proliferation. Phosphorylation of Thr-145 by PIM1 results in the relocation of CDKN1A to the cytoplasm and enhanced CDKN1A protein stability. UV radiation-induced phosphorylation at Ser-146 by NUAK1 leads to its degradation. Ubiquitinated by MKRN1; leading to polyubiquitination and 26S proteasome-dependent degradation. Ubiquitinated by the DCX(DTL) complex, also named CRL4(CDT2) complex, leading to its degradation during S phase or following UV irradiation. Ubiquitination by the DCX(DTL) complex is essential to control replication licensing and is PCNA-dependent: interacts with PCNA via its PIP-box, while the presence of the containing the 'K+4' motif in the PIP box, recruit the DCX(DTL) complex, leading to its degradation. Ubiquitination at Ser-2 leads to degradation by the proteasome pathway. Ubiquitinated by RNF114; leading to proteasomal degradation. Post-translationally, acetylation leads to protein stability. Acetylated in vitro on Lys-141, Lys-154, Lys-161 and Lys-163. Deacetylation by HDAC1 is prevented by competitive binding of C10orf90/FATS to HDAC1.

The protein localises to the cytoplasm. Its subcellular location is the nucleus. In terms of biological role, may be involved in p53/TP53 mediated inhibition of cellular proliferation in response to DNA damage. Binds to and inhibits cyclin-dependent kinase activity, preventing phosphorylation of critical cyclin-dependent kinase substrates and blocking cell cycle progression. Functions in the nuclear localization and assembly of cyclin D-CDK4 complex and promotes its kinase activity towards RB1. At higher stoichiometric ratios, inhibits the kinase activity of the cyclin D-CDK4 complex. Inhibits DNA synthesis by DNA polymerase delta by competing with POLD3 for PCNA binding. Plays an important role in controlling cell cycle progression and DNA damage-induced G2 arrest. Negatively regulates the CDK4- and CDK6-driven phosphorylation of RB1 in keratinocytes, thereby resulting in the release of E2F1 and subsequent transcription of E2F1-driven G1/S phase promoting genes. The sequence is that of Cyclin-dependent kinase inhibitor 1 (CDKN1A) from Felis catus (Cat).